The following is a 381-amino-acid chain: N-acetyldiaminopimelate deacetylase (381 aa).

Asp-73 is an active-site residue. Residue Glu-132 is the Proton acceptor of the active site.

The protein belongs to the peptidase M20A family. N-acetyldiaminopimelate deacetylase subfamily.

It carries out the reaction N-acetyl-(2S,6S)-2,6-diaminopimelate + H2O = (2S,6S)-2,6-diaminopimelate + acetate. The protein operates within amino-acid biosynthesis; L-lysine biosynthesis via DAP pathway; LL-2,6-diaminopimelate from (S)-tetrahydrodipicolinate (acetylase route): step 3/3. In terms of biological role, catalyzes the conversion of N-acetyl-diaminopimelate to diaminopimelate and acetate. The protein is N-acetyldiaminopimelate deacetylase of Limosilactobacillus reuteri (strain DSM 20016) (Lactobacillus reuteri).